Consider the following 127-residue polypeptide: Small ribosomal subunit protein uS12 (127 aa).

D89 carries the post-translational modification 3-methylthioaspartic acid.

It belongs to the universal ribosomal protein uS12 family. In terms of assembly, part of the 30S ribosomal subunit. Contacts proteins S8 and S17. May interact with IF1 in the 30S initiation complex.

Functionally, with S4 and S5 plays an important role in translational accuracy. Its function is as follows. Interacts with and stabilizes bases of the 16S rRNA that are involved in tRNA selection in the A site and with the mRNA backbone. Located at the interface of the 30S and 50S subunits, it traverses the body of the 30S subunit contacting proteins on the other side and probably holding the rRNA structure together. The combined cluster of proteins S8, S12 and S17 appears to hold together the shoulder and platform of the 30S subunit. The polypeptide is Small ribosomal subunit protein uS12 (Akkermansia muciniphila (strain ATCC BAA-835 / DSM 22959 / JCM 33894 / BCRC 81048 / CCUG 64013 / CIP 107961 / Muc)).